A 552-amino-acid polypeptide reads, in one-letter code: Glutamate--tRNA ligase (552 aa).

A 'HIGH' region motif is present at residues 102-112 (PNPSGPLHIGH).

This sequence belongs to the class-I aminoacyl-tRNA synthetase family. Glutamate--tRNA ligase type 2 subfamily.

Its subcellular location is the cytoplasm. The enzyme catalyses tRNA(Glu) + L-glutamate + ATP = L-glutamyl-tRNA(Glu) + AMP + diphosphate. Catalyzes the attachment of glutamate to tRNA(Glu) in a two-step reaction: glutamate is first activated by ATP to form Glu-AMP and then transferred to the acceptor end of tRNA(Glu). This is Glutamate--tRNA ligase from Methanothermobacter marburgensis (strain ATCC BAA-927 / DSM 2133 / JCM 14651 / NBRC 100331 / OCM 82 / Marburg) (Methanobacterium thermoautotrophicum).